The sequence spans 1373 residues: DNA-directed RNA polymerase subunit beta (1373 aa).

The protein belongs to the RNA polymerase beta chain family. The RNAP catalytic core consists of 2 alpha, 1 beta, 1 beta' and 1 omega subunit. When a sigma factor is associated with the core the holoenzyme is formed, which can initiate transcription.

The enzyme catalyses RNA(n) + a ribonucleoside 5'-triphosphate = RNA(n+1) + diphosphate. In terms of biological role, DNA-dependent RNA polymerase catalyzes the transcription of DNA into RNA using the four ribonucleoside triphosphates as substrates. The polypeptide is DNA-directed RNA polymerase subunit beta (Rickettsia massiliae).